The sequence spans 668 residues: Beta-galactosidase (668 aa).

The first 24 residues, 1–24, serve as a signal peptide directing secretion; it reads MARPAAVRVLWALLLPLLLGSARG. Positions 25–29 are excised as a propeptide; that stretch reads LRNAS. Substrate is bound by residues Y84, E130, and N188. E189 serves as the catalytic Proton donor. A disulfide bond links C196 and C231. N-linked (GlcNAc...) asparagine glycosylation occurs at N248. E269 acts as the Nucleophile in catalysis. Residue Y334 participates in substrate binding. N-linked (GlcNAc...) asparagine glycans are attached at residues N465, N499, N546, and N556. The cysteines at positions 627 and 635 are disulfide-linked.

The protein belongs to the glycosyl hydrolase 35 family. In terms of assembly, homodimer. May form higher multimers.

It is found in the lysosome. The catalysed reaction is Hydrolysis of terminal non-reducing beta-D-galactose residues in beta-D-galactosides.. Cleaves beta-linked terminal galactosyl residues from gangliosides, glycoproteins, and glycosaminoglycans. The polypeptide is Beta-galactosidase (GLB1) (Canis lupus familiaris (Dog)).